A 424-amino-acid chain; its full sequence is Enolase (424 aa).

(2R)-2-phosphoglycerate is bound at residue Q165. The Proton donor role is filled by E207. Mg(2+) is bound by residues D244, E283, and D310. Residues K335, R364, S365, and K386 each contribute to the (2R)-2-phosphoglycerate site. K335 acts as the Proton acceptor in catalysis.

This sequence belongs to the enolase family. Requires Mg(2+) as cofactor.

The protein resides in the cytoplasm. Its subcellular location is the secreted. It is found in the cell surface. It catalyses the reaction (2R)-2-phosphoglycerate = phosphoenolpyruvate + H2O. The protein operates within carbohydrate degradation; glycolysis; pyruvate from D-glyceraldehyde 3-phosphate: step 4/5. Its function is as follows. Catalyzes the reversible conversion of 2-phosphoglycerate (2-PG) into phosphoenolpyruvate (PEP). It is essential for the degradation of carbohydrates via glycolysis. The protein is Enolase of Chlamydia caviae (strain ATCC VR-813 / DSM 19441 / 03DC25 / GPIC) (Chlamydophila caviae).